The primary structure comprises 163 residues: Crossover junction endodeoxyribonuclease RuvC (163 aa).

Catalysis depends on residues aspartate 7, glutamate 66, and aspartate 139. Positions 7, 66, and 139 each coordinate Mg(2+).

Belongs to the RuvC family. As to quaternary structure, homodimer which binds Holliday junction (HJ) DNA. The HJ becomes 2-fold symmetrical on binding to RuvC with unstacked arms; it has a different conformation from HJ DNA in complex with RuvA. In the full resolvosome a probable DNA-RuvA(4)-RuvB(12)-RuvC(2) complex forms which resolves the HJ. It depends on Mg(2+) as a cofactor.

It localises to the cytoplasm. It carries out the reaction Endonucleolytic cleavage at a junction such as a reciprocal single-stranded crossover between two homologous DNA duplexes (Holliday junction).. In terms of biological role, the RuvA-RuvB-RuvC complex processes Holliday junction (HJ) DNA during genetic recombination and DNA repair. Endonuclease that resolves HJ intermediates. Cleaves cruciform DNA by making single-stranded nicks across the HJ at symmetrical positions within the homologous arms, yielding a 5'-phosphate and a 3'-hydroxyl group; requires a central core of homology in the junction. The consensus cleavage sequence is 5'-(A/T)TT(C/G)-3'. Cleavage occurs on the 3'-side of the TT dinucleotide at the point of strand exchange. HJ branch migration catalyzed by RuvA-RuvB allows RuvC to scan DNA until it finds its consensus sequence, where it cleaves and resolves the cruciform DNA. The chain is Crossover junction endodeoxyribonuclease RuvC from Thermomicrobium roseum (strain ATCC 27502 / DSM 5159 / P-2).